Consider the following 431-residue polypeptide: Nuclear bridge Ish domain protein les1 (431 aa).

A signal peptide spans 1–21 (MQPRFLLHGALLALGIQLCLS).

It is found in the nucleus inner membrane. Inner nuclear envelope protein involved in nuclear fission, which is achieved via local disassembly of nuclear pores within the narrow bridge that links segregating daughter nuclei. Les1 restricts the process of local nuclear envelope breakdown to the bridge midzone to prevent the leakage of material from daughter nuclei during mitosis. The protein is Nuclear bridge Ish domain protein les1 of Schizosaccharomyces pombe (strain 972 / ATCC 24843) (Fission yeast).